The following is a 1057-amino-acid chain: MPGSRRVRPRLRALLLLPPLLLLRSGHASDLTVAVVLPLTNTSYPWSWARVGPAVELALGRVKARPDLLPGWTVRMVLGSSENAAGVCSDTAAPLAAVDLKWEHSPAVFLGPGCVYSAAPVGRFTAHWRVPLLTAGAPALGIGVKDEYALTTRTGPSHVKLGDFVTALHRRLGWEHQALVLYADRLGDDRPCFFIVEGLYMRVRERLNITVNHQEFVEGDPDHYTKLLRTVQRKGRVIYICSSPDAFRNLMLLALDAGLTGEDYVFFHLDVFGQSLQGAQGPVPRKPWERDDGQDRRARQAFQAAKIITYKEPDNPEYLEFLKQLKLLADKKFNFTMEDGLKNIIPASFHDGLLLYVQAVTETLAQGGTVTDGENITQRMWNRSFQGVTGYLKIDRNGDRDTDFSLWDMDPETGAFRVVLNFNGTSQELMAVSEHRLYWPLGYPPPDIPKCGFDNEDPACNQDHFSTLEVLALVGSLSLVSFLIVSFFIYRKMQLEKELVSELWRVRWEDLQPSSLERHLRSAGSRLTLSGRGSNYGSLLTTEGQFQVFAKTAYYKGNLVAVKRVNRKRIELTRKVLFELKHMRDVQNEHLTRFVGACTDPPNICILTEYCPRGSLQDILENESITLDWMFRYSLTNDIVKGMLFLHNGAIGSHGNLKSSNCVVDGRFVLKITDYGLESFRDPEPEQGHTLFAKKLWTAPELLRMASPPARGSQAGDVYSFGIILQEIALRSGVFYVEGLDLSPKEIIERVTRGEQPPFRPSMDLQSHLEELGQLMQRCWAEDPQERPPFQQIRLALRKFNKENSSNILDNLLSRMEQYANNLEELVEERTQAYLEEKRKAEALLYQILPHSVAEQLKRGETVQAEAFDSVTIYFSDIVGFTALSAESTPMQVVTLLNDLYTCFDAVIDNFDVYKVETIGDAYMVVSGLPVRNGQLHAREVARMALALLDAVRSFRIRHRPQEQLRLRIGIHTGPVCAGVVGLKMPRYCLFGDTVNTASRMESNGEALRIHLSSETKAVLEEFDGFELELRGDVEMKGKGKVRTYWLLGERGCSTRG.

Positions 1–28 (MPGSRRVRPRLRALLLLPPLLLLRSGHA) are cleaved as a signal peptide. Residues 29–469 (SDLTVAVVLP…CNQDHFSTLE (441 aa)) lie on the Extracellular side of the membrane. The N-linked (GlcNAc...) asparagine glycan is linked to Asn-41. Residues Ser-81, Gly-113, and Cys-114 each coordinate chloride. Intrachain disulfides connect Cys-88–Cys-114 and Cys-192–Cys-241. 5 N-linked (GlcNAc...) asparagine glycosylation sites follow: Asn-208, Asn-334, Asn-375, Asn-382, and Asn-423. Cysteines 451 and 460 form a disulfide. A helical membrane pass occupies residues 470-490 (VLALVGSLSLVSFLIVSFFIY). Over 491-1057 (RKMQLEKELV…LGERGCSTRG (567 aa)) the chain is Cytoplasmic. Phosphoserine is present on residues Ser-515 and Ser-525. The region spanning 524 to 801 (GSRLTLSGRG…QIRLALRKFN (278 aa)) is the Protein kinase domain. Thr-528 is subject to Phosphothreonine. 3 positions are modified to phosphoserine: Ser-530, Ser-534, and Ser-538. Thr-541 carries the post-translational modification Phosphothreonine. The region spanning 872–1002 (TIYFSDIVGF…DTVNTASRME (131 aa)) is the Guanylate cyclase domain.

It belongs to the adenylyl cyclase class-4/guanylyl cyclase family. In terms of assembly, homodimer. In terms of processing, phosphorylation of the protein kinase-like domain is required for full activation by ANP.

It localises to the membrane. It catalyses the reaction GTP = 3',5'-cyclic GMP + diphosphate. In terms of biological role, receptor for the atrial natriuretic peptide NPPA/ANP and the brain natriuretic peptide NPPB/BNP which are potent vasoactive hormones playing a key role in cardiovascular homeostasis. Plays an essential role in the regulation of endothelial cell senescence and vascular aging. Upon activation by ANP or BNP, stimulates the production of cyclic guanosine monophosphate (cGMP) that promotes vascular tone and volume homeostasis by activation of protein kinase cGMP-dependent 1/PRKG1 and subsequently PRKAA1, thereby controlling blood pressure and maintaining cardiovascular homeostasis. This is Atrial natriuretic peptide receptor 1 (Npr1) from Mus musculus (Mouse).